The primary structure comprises 1162 residues: Topoisomerase 1-associated factor 1 (1162 aa).

2 disordered regions span residues threonine 977–alanine 1017 and threonine 1127–tyrosine 1162. Residues glutamine 993–alanine 1003 are compositionally biased toward basic residues.

The protein belongs to the timeless family. As to quaternary structure, component of the fork protection complex (FPC) consisting of TOF1 and CSM3.

The protein resides in the nucleus. In terms of biological role, forms a fork protection complex (FPC) with CSM3 and which is required for chromosome segregation during meiosis and DNA damage repair. FPC coordinates leading and lagging strand synthesis and moves with the replication fork. FPC stabilizes replication forks in a configuration that is recognized by replication checkpoint sensors. In Kluyveromyces lactis (strain ATCC 8585 / CBS 2359 / DSM 70799 / NBRC 1267 / NRRL Y-1140 / WM37) (Yeast), this protein is Topoisomerase 1-associated factor 1 (TOF1).